The sequence spans 278 residues: Potassium/proton antiporter CemA (278 aa).

4 consecutive transmembrane segments (helical) span residues 60–80, 163–183, 201–221, and 239–259; these read YLVL…SLVF, ILAF…IAVL, FLII…GWEV, and IFLF…YWIF.

This sequence belongs to the CemA family.

Its subcellular location is the plastid. It localises to the chloroplast inner membrane. It carries out the reaction K(+)(in) + H(+)(out) = K(+)(out) + H(+)(in). Contributes to K(+)/H(+) antiport activity by supporting proton efflux to control proton extrusion and homeostasis in chloroplasts in a light-dependent manner to modulate photosynthesis. Prevents excessive induction of non-photochemical quenching (NPQ) under continuous-light conditions. Indirectly promotes efficient inorganic carbon uptake into chloroplasts. The chain is Potassium/proton antiporter CemA from Guillardia theta (Cryptophyte).